Reading from the N-terminus, the 311-residue chain is Probable manganese-dependent inorganic pyrophosphatase (311 aa).

6 residues coordinate Mn(2+): histidine 9, aspartate 13, aspartate 15, aspartate 77, histidine 99, and aspartate 151.

The protein belongs to the PPase class C family. As to quaternary structure, homodimer. Requires Mn(2+) as cofactor.

It localises to the cytoplasm. It catalyses the reaction diphosphate + H2O = 2 phosphate + H(+). This is Probable manganese-dependent inorganic pyrophosphatase (ppaC) from Streptococcus gordonii (strain Challis / ATCC 35105 / BCRC 15272 / CH1 / DL1 / V288).